The primary structure comprises 351 residues: DNA polymerase IV (351 aa).

A UmuC domain is found at isoleucine 4 to glycine 185. Mg(2+) contacts are provided by aspartate 8 and aspartate 103. The active site involves glutamate 104.

Belongs to the DNA polymerase type-Y family. As to quaternary structure, monomer. It depends on Mg(2+) as a cofactor.

It localises to the cytoplasm. The enzyme catalyses DNA(n) + a 2'-deoxyribonucleoside 5'-triphosphate = DNA(n+1) + diphosphate. Its function is as follows. Poorly processive, error-prone DNA polymerase involved in untargeted mutagenesis. Copies undamaged DNA at stalled replication forks, which arise in vivo from mismatched or misaligned primer ends. These misaligned primers can be extended by PolIV. Exhibits no 3'-5' exonuclease (proofreading) activity. May be involved in translesional synthesis, in conjunction with the beta clamp from PolIII. The chain is DNA polymerase IV from Salmonella paratyphi A (strain ATCC 9150 / SARB42).